The following is a 159-amino-acid chain: UPF0262 protein CCNA_02430 (159 aa).

This sequence belongs to the UPF0262 family.

In Caulobacter vibrioides (strain NA1000 / CB15N) (Caulobacter crescentus), this protein is UPF0262 protein CCNA_02430.